We begin with the raw amino-acid sequence, 67 residues long: DNA-directed RNA polymerase subunit omega (67 aa).

The protein belongs to the RNA polymerase subunit omega family. As to quaternary structure, RNAP is composed of a core of 2 alpha, a beta and a beta' subunit. The core is associated with a delta subunit, and at least one of epsilon or omega. When a sigma factor is associated with the core the holoenzyme is formed, which can initiate transcription.

It catalyses the reaction RNA(n) + a ribonucleoside 5'-triphosphate = RNA(n+1) + diphosphate. In terms of biological role, promotes RNA polymerase assembly. Latches the N- and C-terminal regions of the beta' subunit thereby facilitating its interaction with the beta and alpha subunits. In vitro reconstitution experiments this subunit is dispensible. The sequence is that of DNA-directed RNA polymerase subunit omega (rpoZ) from Bacillus subtilis (strain 168).